The primary structure comprises 367 residues: CCN family member 4 (367 aa).

An N-terminal signal peptide occupies residues 1-22 (MRWLLPWTLAAVAVLRVGNILA). In terms of domain architecture, IGFBP N-terminal spans 45 to 118 (RPEFCKWPCE…RYAIGVCAQV (74 aa)). 4 disulfide bridges follow: Cys49-Cys73, Cys53-Cys75, Cys55-Cys76, and Cys62-Cys79. Asn86 carries an N-linked (GlcNAc...) asparagine glycan. Disulfide bonds link Cys87/Cys101 and Cys93/Cys115. The region spanning 121–186 (VGCVLDGVRY…GQCCEQWVCD (66 aa)) is the VWFC domain. N-linked (GlcNAc...) asparagine glycosylation is present at Asn143. A TSP type-1 domain is found at 215 to 260 (NCIAYTSPWSPCSTTCGLGISTRISNVNARCWPEQESRLCNLRPCD). 5 cysteine pairs are disulfide-bonded: Cys273/Cys310, Cys290/Cys324, Cys301/Cys340, Cys304/Cys342, and Cys309/Cys346. One can recognise a CTCK domain in the interval 273–347 (CLAVYQPEEA…NACFCNLSCR (75 aa)). The N-linked (GlcNAc...) asparagine glycan is linked to Asn284. The N-linked (GlcNAc...) asparagine glycan is linked to Asn343.

This sequence belongs to the CCN family. As to expression, highly expressed in kidney and lung. Lower levels in heart, brain, spleen, liver, skeletal muscle and testis. Expressed in low metastatic melanoma cells.

It localises to the secreted. Downstream regulator in the Wnt/Frizzled-signaling pathway. Associated with cell survival. Adheres to skin and melanoma fibroblasts. In vitro binding to skin fibroblasts occurs through the proteoglycans, decorin and biglycan. Suppresses tumor growth in vivo. The sequence is that of CCN family member 4 (Ccn4) from Mus musculus (Mouse).